A 278-amino-acid chain; its full sequence is Dermonecrotic toxin LlSicTox-alphaIII3ii (278 aa).

His5 is a catalytic residue. Mg(2+)-binding residues include Glu25 and Asp27. His40 functions as the Nucleophile in the catalytic mechanism. Cys44 and Cys50 are oxidised to a cystine. Asp84 contributes to the Mg(2+) binding site.

Belongs to the arthropod phospholipase D family. Class I subfamily. The cofactor is Mg(2+). As to expression, expressed by the venom gland.

The protein localises to the secreted. It catalyses the reaction an N-(acyl)-sphingosylphosphocholine = an N-(acyl)-sphingosyl-1,3-cyclic phosphate + choline. The catalysed reaction is an N-(acyl)-sphingosylphosphoethanolamine = an N-(acyl)-sphingosyl-1,3-cyclic phosphate + ethanolamine. The enzyme catalyses a 1-acyl-sn-glycero-3-phosphocholine = a 1-acyl-sn-glycero-2,3-cyclic phosphate + choline. It carries out the reaction a 1-acyl-sn-glycero-3-phosphoethanolamine = a 1-acyl-sn-glycero-2,3-cyclic phosphate + ethanolamine. In terms of biological role, dermonecrotic toxins cleave the phosphodiester linkage between the phosphate and headgroup of certain phospholipids (sphingolipid and lysolipid substrates), forming an alcohol (often choline) and a cyclic phosphate. This toxin acts on sphingomyelin (SM). It may also act on ceramide phosphoethanolamine (CPE), lysophosphatidylcholine (LPC) and lysophosphatidylethanolamine (LPE), but not on lysophosphatidylserine (LPS), and lysophosphatidylglycerol (LPG). It acts by transphosphatidylation, releasing exclusively cyclic phosphate products as second products. Induces dermonecrosis, hemolysis, increased vascular permeability, edema, inflammatory response, and platelet aggregation. The chain is Dermonecrotic toxin LlSicTox-alphaIII3ii from Loxosceles laeta (South American recluse spider).